A 420-amino-acid polypeptide reads, in one-letter code: Reticulon-4 receptor-like 2 (420 aa).

Positions 1 to 46 are cleaved as a signal peptide; the sequence is MLPGLRRLLQAPASACLLLMLLALPLAAPSCPMLCTCYSSPPTVSC. 2 disulfide bridges follow: Cys-31-Cys-37 and Cys-35-Cys-46. Positions 47–60 constitute an LRRNT domain; that stretch reads QANNFSSVPLSLPP. Asn-50 carries N-linked (GlcNAc...) asparagine glycosylation. LRR repeat units lie at residues 61–82, 83–104, 107–129, 132–153, 156–177, 180–201, 204–225, and 228–249; these read STQR…TFGS, NLLT…TFRH, ALEE…TFQG, RLQS…IFRG, SLQY…LFAD, NLSH…VFRG, SLDR…AFRG, and RLTI…ALAD. Asn-93 carries an N-linked (GlcNAc...) asparagine glycan. Residue Asn-236 is glycosylated (N-linked (GlcNAc...) asparagine). The LRRCT domain maps to 261-312; the sequence is NPWACDCRARPLWAWFQRARVSSSDVTCATPPERQGRDLRALREADFQACPP. Intrachain disulfides connect Cys-265/Cys-288 and Cys-267/Cys-310. The tract at residues 308-399 is disordered; the sequence is QACPPAAPTR…CQAPPDSRGP (92 aa). An important for interaction with MAG region spans residues 315–327; that stretch reads PTRPGSRARGNSS. Over residues 351-360 the composition is skewed to basic and acidic residues; sequence LPAEDSRGRQ. A lipid anchor (GPI-anchor amidated cysteine) is attached at Cys-390. Positions 391–420 are cleaved as a propeptide — removed in mature form; that stretch reads QAPPDSRGPALSAGLPSPLLCLLLLVPHHL.

It belongs to the Nogo receptor family. As to quaternary structure, interaction with MAG is controversial, and may be indirect. Does not interact with MAG, OMG and RTN4. Interacts with MAG. In terms of processing, undergoes zinc metalloproteinase-mediated ectodomain shedding in neuroblastoma cells; is released both as a full-length ectodomain and an N-terminal fragment containing the leucine-rich repeat (LRR) region of the protein. Post-translationally, N-glycosylated. Highly expressed in brain and liver. Expressed at lower levels in kidney, mammary gland, placenta, skeletal muscle, spleen and thyroid.

It is found in the cell membrane. It localises to the membrane raft. The protein localises to the cell projection. The protein resides in the dendrite. Its subcellular location is the perikaryon. It is found in the axon. Its function is as follows. Cell surface receptor that plays a functionally redundant role in the inhibition of neurite outgrowth mediated by MAG. Plays a functionally redundant role in postnatal brain development. Contributes to normal axon migration across the brain midline and normal formation of the corpus callosum. Does not seem to play a significant role in regulating axon regeneration in the adult central nervous system. Protects motoneurons against apoptosis; protection against apoptosis is probably mediated by MAG. Like other family members, plays a role in restricting the number dendritic spines and the number of synapses that are formed during brain development. Signaling mediates activation of Rho and downstream reorganization of the actin cytoskeleton. The polypeptide is Reticulon-4 receptor-like 2 (Homo sapiens (Human)).